The chain runs to 188 residues: Elongation factor P (188 aa).

Lys34 is subject to N6-(3,6-diaminohexanoyl)-5-hydroxylysine.

This sequence belongs to the elongation factor P family. Post-translationally, may be beta-lysylated on the epsilon-amino group of Lys-34 by the combined action of EpmA and EpmB, and then hydroxylated on the C5 position of the same residue by EpmC (if this protein is present). Lysylation is critical for the stimulatory effect of EF-P on peptide-bond formation. The lysylation moiety may extend toward the peptidyltransferase center and stabilize the terminal 3-CCA end of the tRNA. Hydroxylation of the C5 position on Lys-34 may allow additional potential stabilizing hydrogen-bond interactions with the P-tRNA.

It is found in the cytoplasm. The protein operates within protein biosynthesis; polypeptide chain elongation. In terms of biological role, involved in peptide bond synthesis. Alleviates ribosome stalling that occurs when 3 or more consecutive Pro residues or the sequence PPG is present in a protein, possibly by augmenting the peptidyl transferase activity of the ribosome. Modification of Lys-34 is required for alleviation. The protein is Elongation factor P of Pectobacterium carotovorum subsp. carotovorum (strain PC1).